Reading from the N-terminus, the 485-residue chain is Probable trichothecene esterase SAT6 (485 aa).

The disordered stretch occupies residues 1 to 23 (MPQDPNTTLQMSSSKPSLSDLSV). A compositionally biased stretch (low complexity) spans 9-23 (LQMSSSKPSLSDLSV). Active-site charge relay system residues include Ser262, Asp406, and His438.

This sequence belongs to the AB hydrolase superfamily. Lipase family.

Its pathway is mycotoxin biosynthesis. In terms of biological role, probable trichothecene esterase; part of the satratoxin SC1 cluster involved in the biosynthesis of satratoxins, trichothecene mycotoxins that are associated with human food poisonings. Satratoxins are suggested to be made by products of multiple gene clusters (SC1, SC2 and SC3) that encode 21 proteins in all, including polyketide synthases, acetyltransferases, and other enzymes expected to modify the trichothecene skeleton. SC1 encodes 10 proteins, SAT1 to SAT10. The largest are SAT8, which encodes a putative polyketide synthase (PKS) with a conventional non-reducing architecture, and SAT10, a putative protein containing four ankyrin repeats and thus may be involved in protein scaffolding. The putative short-chain reductase SAT3 may assist the PKS in some capacity. SAT6 contains a secretory lipase domain and acts probably as a trichothecene esterase. SAT5 encodes a putative acetyltransferase, and so, with SAT6, may affect endogenous protection from toxicity. The probable transcription factor SAT9 may regulate the expression of the SC1 cluster. SC2 encodes proteins SAT11 to SAT16, the largest of which encodes the putative reducing PKS SAT13. SAT11 is a cytochrome P450 monooxygenase, while SAT14 and SAT16 are probable acetyltransferases. The SC2 cluster may be regulated by the transcription factor SAT15. SC3 is a small cluster that encodes 5 proteins, SAT17 to SAT21. SAT21 is a putative MFS-type transporter which may have a role in exporting secondary metabolites. The four other proteins putatively encoded in SC3 include the taurine hydroxylase-like protein SAT17, the O-methyltransferase SAT18, the acetyltransferase SAT19, and the Cys6-type zinc finger SAT20, the latter being probably involved in regulation of SC3 expression. This chain is Probable trichothecene esterase SAT6, found in Stachybotrys chartarum (strain CBS 109288 / IBT 7711) (Toxic black mold).